A 394-amino-acid chain; its full sequence is S-adenosylmethionine synthase (394 aa).

His16 contributes to the ATP binding site. Asp18 provides a ligand contact to Mg(2+). A K(+)-binding site is contributed by Glu44. L-methionine is bound by residues Glu57 and Gln99. The segment at 99-109 (QSPDIAQGVDE) is flexible loop. ATP contacts are provided by residues 173–175 (DAK), 240–241 (RF), Asp249, 255–256 (RK), Ala272, and Lys276. Asp249 lines the L-methionine pocket. Position 280 (Lys280) interacts with L-methionine.

The protein belongs to the AdoMet synthase family. As to quaternary structure, homotetramer; dimer of dimers. Mg(2+) is required as a cofactor. The cofactor is K(+).

It is found in the cytoplasm. The enzyme catalyses L-methionine + ATP + H2O = S-adenosyl-L-methionine + phosphate + diphosphate. Its pathway is amino-acid biosynthesis; S-adenosyl-L-methionine biosynthesis; S-adenosyl-L-methionine from L-methionine: step 1/1. Catalyzes the formation of S-adenosylmethionine (AdoMet) from methionine and ATP. The overall synthetic reaction is composed of two sequential steps, AdoMet formation and the subsequent tripolyphosphate hydrolysis which occurs prior to release of AdoMet from the enzyme. This Lacticaseibacillus paracasei (strain ATCC 334 / BCRC 17002 / CCUG 31169 / CIP 107868 / KCTC 3260 / NRRL B-441) (Lactobacillus paracasei) protein is S-adenosylmethionine synthase.